The following is a 497-amino-acid chain: Protein FAM114A2 (497 aa).

The segment at 1–54 (MSDKDPPESPVVTGVASTLKDENCEPVEKPEDKSQPVVSTRKRPETKPSSDLEA) is disordered. A compositionally biased stretch (basic and acidic residues) spans 19-34 (LKDENCEPVEKPEDKS). 2 positions are modified to phosphoserine: S84 and S205. The interval 344 to 364 (VAEKEEGEKESEAGNTEEAQK) is disordered.

Belongs to the FAM114 family.

In Mus musculus (Mouse), this protein is Protein FAM114A2 (Fam114a2).